A 433-amino-acid polypeptide reads, in one-letter code: Trigger factor (433 aa).

One can recognise a PPIase FKBP-type domain in the interval 161–246 (EDRVVIDFVG…LKKVENIVLP (86 aa)).

Belongs to the FKBP-type PPIase family. Tig subfamily.

The protein resides in the cytoplasm. It carries out the reaction [protein]-peptidylproline (omega=180) = [protein]-peptidylproline (omega=0). In terms of biological role, involved in protein export. Acts as a chaperone by maintaining the newly synthesized protein in an open conformation. Functions as a peptidyl-prolyl cis-trans isomerase. This Actinobacillus pleuropneumoniae serotype 7 (strain AP76) protein is Trigger factor.